Here is a 486-residue protein sequence, read N- to C-terminus: Replication factor C large subunit (486 aa).

An ATP-binding site is contributed by 46–53; it reads GPPGSGKT. Residues 419–486 are disordered; that stretch reads VKKETPKKTE…KKQATLDSFF (68 aa). 2 stretches are compositionally biased toward basic and acidic residues: residues 420–432 and 442–480; these read KKET…KPKE and RISE…KKQA.

Belongs to the activator 1 small subunits family. RfcL subfamily. In terms of assembly, heteromultimer composed of small subunits (RfcS) and large subunits (RfcL).

Part of the RFC clamp loader complex which loads the PCNA sliding clamp onto DNA. The protein is Replication factor C large subunit of Methanococcus maripaludis (strain DSM 14266 / JCM 13030 / NBRC 101832 / S2 / LL).